The following is a 162-amino-acid chain: Transcription elongation factor GreA (162 aa).

The stretch at 50-75 forms a coiled coil; the sequence is YHAAREEQGHLESRIRQLQELLRTAK.

Belongs to the GreA/GreB family.

Necessary for efficient RNA polymerase transcription elongation past template-encoded arresting sites. The arresting sites in DNA have the property of trapping a certain fraction of elongating RNA polymerases that pass through, resulting in locked ternary complexes. Cleavage of the nascent transcript by cleavage factors such as GreA or GreB allows the resumption of elongation from the new 3'terminus. GreA releases sequences of 2 to 3 nucleotides. The polypeptide is Transcription elongation factor GreA (Saccharopolyspora erythraea (strain ATCC 11635 / DSM 40517 / JCM 4748 / NBRC 13426 / NCIMB 8594 / NRRL 2338)).